The primary structure comprises 141 residues: Hemoglobin subunit alpha (141 aa).

One can recognise a Globin domain in the interval Val1 to Arg141. Phosphoserine is present on Ser3. An N6-succinyllysine modification is found at Lys7. The residue at position 8 (Thr8) is a Phosphothreonine. Lys11 carries the N6-succinyllysine modification. Lys16 bears the N6-acetyllysine; alternate mark. Lys16 carries the post-translational modification N6-succinyllysine; alternate. Tyr24 is modified (phosphotyrosine). The residue at position 35 (Ser35) is a Phosphoserine. Lys40 is modified (N6-succinyllysine). Ser49 carries the post-translational modification Phosphoserine. His58 lines the O2 pocket. Position 87 (His87) interacts with heme b. Ser102 bears the Phosphoserine mark. Thr108 is modified (phosphothreonine). Phosphoserine is present on Ser124. Phosphothreonine is present on residues Thr134 and Thr137. Ser138 is subject to Phosphoserine.

The protein belongs to the globin family. As to quaternary structure, heterotetramer of two alpha chains and two beta chains. Red blood cells.

In terms of biological role, involved in oxygen transport from the lung to the various peripheral tissues. Hemopressin acts as an antagonist peptide of the cannabinoid receptor CNR1. Hemopressin-binding efficiently blocks cannabinoid receptor CNR1 and subsequent signaling. This chain is Hemoglobin subunit alpha (HBA), found in Chrysocyon brachyurus (Maned wolf).